A 174-amino-acid polypeptide reads, in one-letter code: Mytilin-3 (174 aa).

The N-terminal stretch at 1–16 is a signal peptide; that stretch reads MLKGIILIVTIQLVNA.

In terms of tissue distribution, component of the organic matrix of calcified shell layers like nacre and prisms.

Its subcellular location is the secreted. In Mytilus californianus (California mussel), this protein is Mytilin-3.